Consider the following 181-residue polypeptide: UPF0398 protein LMOf2365_1918 (181 aa).

The protein belongs to the UPF0398 family.

The protein is UPF0398 protein LMOf2365_1918 of Listeria monocytogenes serotype 4b (strain F2365).